The primary structure comprises 243 residues: Uroporphyrinogen-III C-methyltransferase (243 aa).

Residues Pro12, Ser88 to Asp90, Ser118 to Thr119, Met166, and Ala195 each bind S-adenosyl-L-homocysteine.

The protein belongs to the precorrin methyltransferase family.

It catalyses the reaction uroporphyrinogen III + 2 S-adenosyl-L-methionine = precorrin-2 + 2 S-adenosyl-L-homocysteine + H(+). The protein operates within cofactor biosynthesis; adenosylcobalamin biosynthesis; precorrin-2 from uroporphyrinogen III: step 1/1. It functions in the pathway porphyrin-containing compound metabolism; siroheme biosynthesis; precorrin-2 from uroporphyrinogen III: step 1/1. Its function is as follows. Catalyzes the two successive C-2 and C-7 methylation reactions involved in the conversion of uroporphyrinogen III to precorrin-2 via the intermediate formation of precorrin-1. It is a step in the biosynthesis of both cobalamin (vitamin B12) and siroheme. The sequence is that of Uroporphyrinogen-III C-methyltransferase from Synechococcus elongatus (strain ATCC 33912 / PCC 7942 / FACHB-805) (Anacystis nidulans R2).